Here is a 350-residue protein sequence, read N- to C-terminus: MQASQFSAQVLDWYDKYGRKTLPWQIDKTPYKVWLSEVMLQQTQVATVIPYFERFMARFPTVTDLANAPLDEVLHLWTGLGYYARARNLHKAAQQVATLHGGKFPETFEEVAALPGVGRSTAGAILSLSLGKHFPILDGNVKRVLARCYAVSGWPGKKEVENKLWSLSEQVTPAVGVERFNQAMMDLGAMICTRSKPKCSLCPLQNGCIAAANNSWALYPGKKPKQTLPERTGYFLLLQHEDEVLLAQRPPSGLWGGLYCFPQFADEESLRQWLAQRQIAADNLTQLTAFRHTFSHFHLDIVPMWLPVSSFTGCMDEGNALWYNLAQPPSVGLAAPVERLLQQLRTGAPV.

Catalysis depends on glutamate 37, which acts as the Proton donor/acceptor. Positions 192, 199, 202, and 208 each coordinate [4Fe-4S] cluster.

It belongs to the Nth/MutY family. Monomer. Requires [4Fe-4S] cluster as cofactor.

It carries out the reaction Hydrolyzes free adenine bases from 7,8-dihydro-8-oxoguanine:adenine mismatched double-stranded DNA, leaving an apurinic site.. Its function is as follows. Adenine glycosylase active on G-A mispairs. MutY also corrects error-prone DNA synthesis past GO lesions which are due to the oxidatively damaged form of guanine: 7,8-dihydro-8-oxoguanine (8-oxo-dGTP). This Escherichia coli (strain K12) protein is Adenine DNA glycosylase (mutY).